The chain runs to 165 residues: uncharacterized protein (165 aa).

The helical transmembrane segment at 16-36 (ASISSILNFFFFYIMEYFVAV) threads the bilayer.

Belongs to the asfivirus F165R family.

It localises to the host membrane. This is an uncharacterized protein from Ornithodoros (relapsing fever ticks).